The primary structure comprises 433 residues: Evolutionarily conserved signaling intermediate in Toll pathway, mitochondrial (433 aa).

The transit peptide at 1–48 (MSWAQAILLARGASRGWGGICSTALTGAPFSQVPPQAPRGLRCSAAAH) directs the protein to the mitochondrion. Positions 36 to 63 (QAPRGLRCSAAAHNPDSSLVPHPPEPPR) are disordered. Residue Lys-372 forms a Glycyl lysine isopeptide (Lys-Gly) (interchain with G-Cter in ubiquitin) linkage. The tract at residues 397–433 (SGELLPSSSELEEPPPPPPEGQEEEEDSQQRQQQGQS) is disordered.

The protein belongs to the ECSIT family. In terms of assembly, interacts with MAP3K1, SMAD4 and TRAF6. Interacts with SMAD1 only after BMP4-treatment. Part of the mitochondrial complex I assembly/MCIA complex that comprises at least the core subunits TMEM126B, NDUFAF1, ECSIT and ACAD9 and complement subunits such as COA1 and TMEM186. Interacts with NDUFAF1. Interacts with ACAD9. Interacts with TRIM59. Interacts with TMEM70 and TMEM242. Interacts (when ubiquitinated) with NF-kappa-B subunits RELA and NFKB1. Interacts with RIGI, IFIT1 and MAVS; these interactions promote RLR-mediated type I IFN induction. Interacts with SQSTM1; this interaction inhibits TLR4 signaling via functional regulation of the TRAF6-ECSIT complex. Interacts with cereblon/CRBN; this interaction inhibits the ubiquitination of ECSIT. Ubiquitinated on Lys-372; leading to translocation in the nucleus together with RELA and NFKB1 and expression of NF-kappa-B-dependent genes.

Its subcellular location is the cytoplasm. It localises to the nucleus. It is found in the mitochondrion. Functionally, adapter protein that plays a role in different signaling pathways including TLRs and IL-1 pathways or innate antiviral induction signaling. Plays a role in the activation of NF-kappa-B by forming a signal complex with TRAF6 and TAK1/MAP3K7 to activate TAK1/MAP3K7 leading to activation of IKKs. Once ubiquitinated, interacts with the dissociated RELA and NFKB1 proteins and translocates to the nucleus where it induces NF-kappa-B-dependent gene expression. Plays a role in innate antiviral immune response by bridging the pattern recognition receptors RIGI and MDA5/IFIT1 to the MAVS complex at the mitochondrion. Promotes proteolytic activation of MAP3K1. Involved in the BMP signaling pathway. Required for normal embryonic development. As part of the MCIA complex, involved in the assembly of the mitochondrial complex I. The protein is Evolutionarily conserved signaling intermediate in Toll pathway, mitochondrial of Bos taurus (Bovine).